A 117-amino-acid polypeptide reads, in one-letter code: Ig heavy chain V region 5-84 (117 aa).

The first 19 residues, 1-19, serve as a signal peptide directing secretion; it reads MNFGLSLIFLVLVLKGVLC. Positions 20–49 are framework-1; sequence EVKLVESGGGLVQPGGSLKLSCAASGFTFS. A disulfide bridge connects residues Cys41 and Cys115. The tract at residues 50–54 is complementarity-determining-1; that stretch reads SYTMS. Residues 55–68 form a framework-2 region; the sequence is WVRQTPEKRLEWVA. The interval 69–85 is complementarity-determining-2; it reads YISNGGGSTYYPDTVKG. The tract at residues 86-117 is framework-3; the sequence is RFTISRDNAKNNLYLQMSSLKSEDTAMYYCAR.

The chain is Ig heavy chain V region 5-84 from Mus musculus (Mouse).